We begin with the raw amino-acid sequence, 247 residues long: Transmembrane protein 33 (247 aa).

Ala-2 carries the N-acetylalanine modification. Over 2-31 the chain is Lumenal; sequence ADTTPNGPQGAGAVQFMMTNKLDTAMWLSR. The chain crosses the membrane as a helical span at residues 32-52; that stretch reads LFTVYCSALFVLPLLGLHEAA. The Cytoplasmic portion of the chain corresponds to 53-100; that stretch reads SFYQRALLANALTSALRLHQRLPHFQLSRAFLAQALLEDSCHYLLYSL. A helical membrane pass occupies residues 101-121; sequence IFVNSYPVTMSIFPVLLFSLL. Topologically, residues 122–155 are lumenal; that stretch reads HAATYTKKVLDAKGSNSLPLLRSVLDKLSTNQQN. Residues 156 to 176 traverse the membrane as a helical segment; the sequence is ILKFIACNEIFLMPATVFMLF. Topologically, residues 177–247 are cytoplasmic; sequence SGQGSLLQPF…FISRLAPTVA (71 aa).

This sequence belongs to the PER33/POM33 family. As to quaternary structure, interacts with EIF2AK3. Interacts with ARL6IP1, isoform RTN1-A of RTN1, isoform RTN2-B of RTN2, isoform 3 of RTN3 and isoform 3 of RTN4. Interacts with RNF5. Interacts with RNF26. Interacts with PKD2. Highly expressed in the liver and significantly in brain, lungs and kidneys.

It localises to the endoplasmic reticulum membrane. Its subcellular location is the melanosome. The protein localises to the nucleus envelope. Acts as a regulator of the tubular endoplasmic reticulum (ER) network by modulating intracellular calcium homeostasis. Mechanistically, stimulates PKD2 calcium-dependent activity. Suppresses the RTN3/4-induced formation of the ER tubules. Positively regulates PERK-mediated and IRE1-mediated unfolded protein response signaling. Plays an essential role in VEGF-mediated release of Ca(2+) from ER stores during angiogenesis. Also plays a role in the modulation of innate immune signaling through the cGAS-STING pathway by interacting with RNF26. Participates in lipid metabolism by acting as a downstream effector of the pyruvate kinase/PKM. Forms a complex with RNF5 to facilitate polyubiquitination and subsequent degradation of SCAP on the ER membrane. This Rattus norvegicus (Rat) protein is Transmembrane protein 33 (Tmem33).